An 881-amino-acid polypeptide reads, in one-letter code: Lon protease (881 aa).

A compositionally biased stretch (basic and acidic residues) spans 1–24 (MAKNTDIEHDAHEPAGHGDVRESA). Positions 1–77 (MAKNTDIEHD…RAGEAEKGVP (77 aa)) are disordered. The span at 49–59 (QTDTESAQGAA) shows a compositional bias: polar residues. The segment covering 65–77 (EVQRAGEAEKGVP) has biased composition (basic and acidic residues). The Lon N-terminal domain occupies 94-287 (VHLIPLTGRP…EVFVYIKKEK (194 aa)). 440 to 447 (GPPGVGKT) is a binding site for ATP. The region spanning 679–861 (ANKVGTAVGL…EEVLSLAFPK (183 aa)) is the Lon proteolytic domain. Active-site residues include S767 and K810.

Belongs to the peptidase S16 family. As to quaternary structure, homohexamer. Organized in a ring with a central cavity.

It is found in the cytoplasm. The enzyme catalyses Hydrolysis of proteins in presence of ATP.. Its function is as follows. ATP-dependent serine protease that mediates the selective degradation of mutant and abnormal proteins as well as certain short-lived regulatory proteins. Required for cellular homeostasis and for survival from DNA damage and developmental changes induced by stress. Degrades polypeptides processively to yield small peptide fragments that are 5 to 10 amino acids long. Binds to DNA in a double-stranded, site-specific manner. The protein is Lon protease of Treponema pallidum (strain Nichols).